We begin with the raw amino-acid sequence, 208 residues long: Imidazoleglycerol-phosphate dehydratase (208 aa).

The protein belongs to the imidazoleglycerol-phosphate dehydratase family.

The catalysed reaction is D-erythro-1-(imidazol-4-yl)glycerol 3-phosphate = 3-(imidazol-4-yl)-2-oxopropyl phosphate + H2O. It functions in the pathway amino-acid biosynthesis; L-histidine biosynthesis; L-histidine from 5-phospho-alpha-D-ribose 1-diphosphate: step 6/9. This is Imidazoleglycerol-phosphate dehydratase (his3) from Trichoderma harzianum (Hypocrea lixii).